The chain runs to 231 residues: Uracil-DNA glycosylase (231 aa).

Residue D74 is the Proton acceptor of the active site.

This sequence belongs to the uracil-DNA glycosylase (UDG) superfamily. UNG family.

Its subcellular location is the cytoplasm. The enzyme catalyses Hydrolyzes single-stranded DNA or mismatched double-stranded DNA and polynucleotides, releasing free uracil.. Functionally, excises uracil residues from the DNA which can arise as a result of misincorporation of dUMP residues by DNA polymerase or due to deamination of cytosine. This is Uracil-DNA glycosylase from Campylobacter jejuni subsp. jejuni serotype O:2 (strain ATCC 700819 / NCTC 11168).